The primary structure comprises 395 residues: HORMA domain-containing protein 1 (395 aa).

The HORMA domain occupies 24–226 (QQSLVLVKRL…TPFHTFKVKV (203 aa)). A disordered region spans residues 329-395 (DVSESKTRSG…RKFSEPKEYV (67 aa)). The span at 344 to 353 (KMANGNQPVK) shows a compositional bias: polar residues. Positions 354 to 363 (SSKENRKRNQ) are enriched in basic and acidic residues. Residue Ser-377 is modified to Phosphoserine. The Nuclear localization signal signature appears at 384–387 (KRRK).

As to quaternary structure, interacts with HORMAD2. Interacts with IHO1. In terms of processing, phosphorylated at Ser-378 in a SPO11-dependent manner.

The protein localises to the nucleus. Its subcellular location is the chromosome. Plays a key role in meiotic progression. Regulates 3 different functions during meiosis: ensures that sufficient numbers of processed DNA double-strand breaks (DSBs) are available for successful homology search by increasing the steady-state numbers of single-stranded DSB ends. Promotes synaptonemal-complex formation independently of its role in homology search. Plays a key role in the male mid-pachytene checkpoint and the female meiotic prophase checkpoint: required for efficient build-up of ATR activity on unsynapsed chromosome regions, a process believed to form the basis of meiotic silencing of unsynapsed chromatin (MSUC) and meiotic prophase quality control in both sexes. The protein is HORMA domain-containing protein 1 (HORMAD1) of Canis lupus familiaris (Dog).